A 438-amino-acid chain; its full sequence is MARFFQPKKKLQPESKHQQVLVEKLDHQGAGIAYLNKKPLFIDGTLPGEEVVTQLTESKSKFARGKLIKLLKPAAERVEPFCSHFNQCGGCDMQHMDYQAQLAYKQRTLLQLMKKFSGSEILLSPPVTGLEKAYRRRARVSLMWDKKSRQLQFGFRRKQSKQIENVTQCPVLVAELECLLPELKAILSHFHHPEHLGHVELVAADNGAVITLRHTGPLLDEDVAKLRQCAEQHQATLYLMPASDQLERISGEAPYYQEIGFKVPFEPNNFIQVNQKVNQQMVVQALEWLDPQSSDRVLDLFCGLGNFSLPIASKAKSVTGVEGVDDMVQKAALNASLNQINNAQFFHANLEQDFVGQPWASEKFDKILLDPARAGASGIIEQVSALGAKRVVYVSCNPATLARDSQSLLEQGYRLTKLGMLDMFPYTSHLESMALFEK.

The TRAM domain occupies L11–K69. Residues C82, C88, C91, and C169 each coordinate [4Fe-4S] cluster. S-adenosyl-L-methionine is bound by residues Q272, F301, N306, E322, N349, and D370. C396 (nucleophile) is an active-site residue.

It belongs to the class I-like SAM-binding methyltransferase superfamily. RNA M5U methyltransferase family. RlmD subfamily.

It catalyses the reaction uridine(1939) in 23S rRNA + S-adenosyl-L-methionine = 5-methyluridine(1939) in 23S rRNA + S-adenosyl-L-homocysteine + H(+). In terms of biological role, catalyzes the formation of 5-methyl-uridine at position 1939 (m5U1939) in 23S rRNA. The chain is 23S rRNA (uracil(1939)-C(5))-methyltransferase RlmD from Vibrio vulnificus (strain YJ016).